We begin with the raw amino-acid sequence, 294 residues long: Undecaprenyl-diphosphatase (294 aa).

The next 6 helical transmembrane spans lie at 39–59, 93–113, 123–143, 198–218, 232–252, and 268–288; these read PGAA…ILYF, ATLG…GFTL, NLWI…MVDA, SFLM…IKAV, PTLV…IGFL, and IGLA…AIDP.

The protein belongs to the UppP family.

It is found in the cell membrane. The enzyme catalyses di-trans,octa-cis-undecaprenyl diphosphate + H2O = di-trans,octa-cis-undecaprenyl phosphate + phosphate + H(+). Its function is as follows. Catalyzes the dephosphorylation of undecaprenyl diphosphate (UPP). Confers resistance to bacitracin. This chain is Undecaprenyl-diphosphatase, found in Bifidobacterium longum (strain DJO10A).